Consider the following 158-residue polypeptide: uncharacterized protein (158 aa).

This is an uncharacterized protein from Mycoplasma pneumoniae (strain ATCC 29342 / M129 / Subtype 1) (Mycoplasmoides pneumoniae).